The primary structure comprises 90 residues: Antitoxin VapB35 (90 aa).

A disordered region spans residues glycine 53–tyrosine 90.

The protein belongs to the phD/YefM antitoxin family.

Its function is as follows. Antitoxin component of a type II toxin-antitoxin (TA) system. Neutralizes the effect of cognate toxin VapC35. The protein is Antitoxin VapB35 (vapB35) of Mycobacterium tuberculosis (strain CDC 1551 / Oshkosh).